The following is a 521-amino-acid chain: Acidic amino acid decarboxylase GADL1 (521 aa).

A compositionally biased stretch (basic and acidic residues) spans 1-12; it reads MSLLPDRERAPD. A disordered region spans residues 1–20; the sequence is MSLLPDRERAPDGDISPQEM. Lysine 333 is subject to N6-(pyridoxal phosphate)lysine.

This sequence belongs to the group II decarboxylase family. In terms of assembly, homodimer. Pyridoxal 5'-phosphate is required as a cofactor. In terms of tissue distribution, expressed at highest levels in skeletal muscles. Also detected heart, spleen and rumen.

It carries out the reaction L-aspartate + H(+) = beta-alanine + CO2. The catalysed reaction is 3-sulfino-L-alanine + H(+) = hypotaurine + CO2. It catalyses the reaction L-cysteate + H(+) = taurine + CO2. Its function is as follows. Catalyzes the decarboxylation of L-aspartate, 3-sulfino-L-alanine (cysteine sulfinic acid), and L-cysteate to beta-alanine, hypotaurine and taurine, respectively. The preferred substrate is L-aspartate. Does not exhibit any decarboxylation activity toward glutamate. This Bos taurus (Bovine) protein is Acidic amino acid decarboxylase GADL1 (GADL1).